The following is a 77-amino-acid chain: MGSLSIWHWILVIAVVLLLFGRGKISDLMGDVAQGIKAFKKGMQDDDKPADKPEPAKSIEHNAAPTAARSDVGSKAV.

A helical membrane pass occupies residues 1–21 (MGSLSIWHWILVIAVVLLLFG). The segment covering 42-60 (GMQDDDKPADKPEPAKSIE) has biased composition (basic and acidic residues). The interval 42-77 (GMQDDDKPADKPEPAKSIEHNAAPTAARSDVGSKAV) is disordered.

It belongs to the TatA/E family. The Tat system comprises two distinct complexes: a TatABC complex, containing multiple copies of TatA, TatB and TatC subunits, and a separate TatA complex, containing only TatA subunits. Substrates initially bind to the TatABC complex, which probably triggers association of the separate TatA complex to form the active translocon.

Its subcellular location is the cell inner membrane. Part of the twin-arginine translocation (Tat) system that transports large folded proteins containing a characteristic twin-arginine motif in their signal peptide across membranes. TatA could form the protein-conducting channel of the Tat system. The polypeptide is Sec-independent protein translocase protein TatA (Bradyrhizobium diazoefficiens (strain JCM 10833 / BCRC 13528 / IAM 13628 / NBRC 14792 / USDA 110)).